A 308-amino-acid polypeptide reads, in one-letter code: Aspartate carbamoyltransferase catalytic subunit (308 aa).

Residues R55 and T56 each contribute to the carbamoyl phosphate site. K85 provides a ligand contact to L-aspartate. Carbamoyl phosphate is bound by residues R106, H135, and Q138. Residues R168 and R229 each contribute to the L-aspartate site. Carbamoyl phosphate contacts are provided by L267 and P268.

It belongs to the aspartate/ornithine carbamoyltransferase superfamily. ATCase family. In terms of assembly, heterododecamer (2C3:3R2) of six catalytic PyrB chains organized as two trimers (C3), and six regulatory PyrI chains organized as three dimers (R2).

It carries out the reaction carbamoyl phosphate + L-aspartate = N-carbamoyl-L-aspartate + phosphate + H(+). The protein operates within pyrimidine metabolism; UMP biosynthesis via de novo pathway; (S)-dihydroorotate from bicarbonate: step 2/3. Functionally, catalyzes the condensation of carbamoyl phosphate and aspartate to form carbamoyl aspartate and inorganic phosphate, the committed step in the de novo pyrimidine nucleotide biosynthesis pathway. In Laribacter hongkongensis (strain HLHK9), this protein is Aspartate carbamoyltransferase catalytic subunit.